We begin with the raw amino-acid sequence, 440 residues long: Adenylyltransferase and sulfurtransferase UBA4 (440 aa).

An N-acetylmethionine modification is found at Met1. ATP is bound by residues Gly77, Asp98, 105 to 109 (SNLHR), Lys122, and 166 to 167 (DS). Cys208 and Cys211 together coordinate Zn(2+). Cys225 acts as the Glycyl thioester intermediate; for adenylyltransferase activity in catalysis. The Zn(2+) site is built by Cys286 and Cys289. The residue at position 326 (Ser326) is a Phosphoserine. The 100-residue stretch at 339-438 (FLAKHIFLDV…YIDDIDQTIP (100 aa)) folds into the Rhodanese domain. The Cysteine persulfide intermediate; for sulfurtransferase activity role is filled by Cys397.

In the N-terminal section; belongs to the HesA/MoeB/ThiF family. UBA4 subfamily. It depends on Zn(2+) as a cofactor.

Its subcellular location is the cytoplasm. The protein resides in the cytosol. It participates in tRNA modification; 5-methoxycarbonylmethyl-2-thiouridine-tRNA biosynthesis. In terms of biological role, plays a central role in 2-thiolation of mcm(5)S(2)U at tRNA wobble positions of cytosolic tRNA(Lys), tRNA(Glu) and tRNA(Gln). Acts by mediating the C-terminal thiocarboxylation of sulfur carrier URM1. Its N-terminus first activates URM1 as acyl-adenylate (-COAMP), then the persulfide sulfur on the catalytic cysteine is transferred to URM1 to form thiocarboxylation (-COSH) of its C-terminus. The reaction probably involves hydrogen sulfide that is generated from the persulfide intermediate and that acts as a nucleophile towards URM1. Subsequently, a transient disulfide bond is formed. Does not use thiosulfate as sulfur donor; NFS1 probably acting as a sulfur donor for thiocarboxylation reactions. Prior mcm(5) tRNA modification by the elongator complex is required for 2-thiolation. May also be involved in protein urmylation. The polypeptide is Adenylyltransferase and sulfurtransferase UBA4 (Saccharomyces cerevisiae (strain YJM789) (Baker's yeast)).